The chain runs to 148 residues: Single-stranded DNA-binding protein, mitochondrial (148 aa).

A mitochondrion-targeting transit peptide spans 1 to 16 (MFRRPVLQVLRQFVRH). Positions 30–141 (LNRVHLLGRV…IIADNIIFLS (112 aa)) constitute an SSB domain. S67 and S79 each carry phosphoserine. The residue at position 113 (K113) is an N6-acetyllysine. K122 is modified (N6-succinyllysine).

Homotetramer. Interacts with MPG/AAG, through inhibition of its glycosylase activity it potentially prevents formation of DNA breaks in ssDNA, ensuring that base removal primarily occurs in dsDNA. Interacts with POLDIP2. Interacts with PRIMPOL.

The protein localises to the mitochondrion. It is found in the mitochondrion matrix. It localises to the mitochondrion nucleoid. Binds preferentially and cooperatively to pyrimidine rich single-stranded DNA (ss-DNA). In vitro, required to maintain the copy number of mitochondrial DNA (mtDNA) and plays a crucial role during mtDNA replication by stimulating the activity of the replisome components POLG and TWNK at the replication fork. Promotes the activity of the gamma complex polymerase POLG, largely by organizing the template DNA and eliminating secondary structures to favor ss-DNA conformations that facilitate POLG activity. In addition it is able to promote the 5'-3' unwinding activity of the mtDNA helicase TWNK. May also function in mtDNA repair. This Pongo abelii (Sumatran orangutan) protein is Single-stranded DNA-binding protein, mitochondrial (SSBP1).